Reading from the N-terminus, the 260-residue chain is UPF0246 protein Bphyt_1375 (260 aa).

It belongs to the UPF0246 family.

This is UPF0246 protein Bphyt_1375 from Paraburkholderia phytofirmans (strain DSM 17436 / LMG 22146 / PsJN) (Burkholderia phytofirmans).